The chain runs to 234 residues: UDP-2,3-diacylglucosamine hydrolase (234 aa).

Mn(2+)-binding residues include aspartate 9, histidine 11, aspartate 42, asparagine 80, and histidine 115. Residue 80–81 (NR) participates in substrate binding. Residues aspartate 123, serine 161, lysine 165, lysine 168, and histidine 196 each coordinate substrate. 2 residues coordinate Mn(2+): histidine 196 and histidine 198.

This sequence belongs to the LpxH family. Mn(2+) is required as a cofactor.

The protein resides in the cell inner membrane. It carries out the reaction UDP-2-N,3-O-bis[(3R)-3-hydroxytetradecanoyl]-alpha-D-glucosamine + H2O = 2-N,3-O-bis[(3R)-3-hydroxytetradecanoyl]-alpha-D-glucosaminyl 1-phosphate + UMP + 2 H(+). The protein operates within glycolipid biosynthesis; lipid IV(A) biosynthesis; lipid IV(A) from (3R)-3-hydroxytetradecanoyl-[acyl-carrier-protein] and UDP-N-acetyl-alpha-D-glucosamine: step 4/6. Hydrolyzes the pyrophosphate bond of UDP-2,3-diacylglucosamine to yield 2,3-diacylglucosamine 1-phosphate (lipid X) and UMP by catalyzing the attack of water at the alpha-P atom. Involved in the biosynthesis of lipid A, a phosphorylated glycolipid that anchors the lipopolysaccharide to the outer membrane of the cell. The chain is UDP-2,3-diacylglucosamine hydrolase from Haemophilus ducreyi (strain 35000HP / ATCC 700724).